Here is a 429-residue protein sequence, read N- to C-terminus: Transcriptional coactivator AacuS (429 aa).

Residues 80–144 (MASQTQLLAC…GFLQEPELGH (65 aa)) enclose the HTH iclR-type domain. The segment at residues 110–129 (IKDVAELIGVPENHICRIVR) is a DNA-binding region (H-T-H motif).

It is found in the nucleus. In terms of biological role, transcriptional coactivator; part of the gene cluster that mediates the biosynthesis of the tetrahydroxanthone dimer secalonic acid D. In Aspergillus aculeatus (strain ATCC 16872 / CBS 172.66 / WB 5094), this protein is Transcriptional coactivator AacuS.